A 513-amino-acid chain; its full sequence is Serine/threonine-protein phosphatase T (513 aa).

3 TPR repeats span residues 12-45 (ALERKNEGNVFVKEKHFLKAIEKYTEAIDLDSTQ), 46-79 (SIYFSNRAFAHFKVDNFQSALNDCDEAIKLDPKN), and 80-113 (IKAYHRRALSCMALLEFKKARKDLNVLLKAKPND). Positions 188 to 513 (KNMSQEFISK…MAYSNGGFGL (326 aa)) are catalytic. Residues Asp249, His251, Asp278, and Asn310 each coordinate Mn(2+). His311 acts as the Proton donor/acceptor in catalysis. Positions 359 and 434 each coordinate Mn(2+).

The protein belongs to the PPP phosphatase family. PP-5 (PP-T) subfamily. As to quaternary structure, interacts (via TPR repeats) with HSP82 (via C-terminal MEEVD pentapeptide). The cofactor is Mg(2+). Mn(2+) serves as cofactor.

Its subcellular location is the nucleus. It catalyses the reaction O-phospho-L-seryl-[protein] + H2O = L-seryl-[protein] + phosphate. It carries out the reaction O-phospho-L-threonyl-[protein] + H2O = L-threonyl-[protein] + phosphate. With respect to regulation, stimulated by arachidonic acid and other unsaturated fatty acids, and by arachidoyl coenzyme A. Protein phosphatase that specifically binds to and dephosphorylates the molecular chaperone Hsp90 (HSC82 and HSP82). Dephosphorylation positively regulates the Hsp90 chaperone machinery. This is Serine/threonine-protein phosphatase T (PPT1) from Saccharomyces cerevisiae (strain ATCC 204508 / S288c) (Baker's yeast).